Consider the following 696-residue polypeptide: MTHTISGQYGRDTIVLETGNWAKQAHGAVVYKSGNLVLLATVCAADDAKEGQDFFPLTCEYTEKLYSVGRFPGGYFKREAKPPEHEILISRIIDRPIRPLFPEGYFCEVQLQVQVLSADGDVSVAGHALNAASVALTISDIPFNGPIAGARIGRINGELILNPTTKEIVNSDLDLVVAGTKTHIVMIEGEAKELSNEEMLSALRFAQKHIAEFVTLQEEYAKQIGVVKREVKLKARDVELLAKVKEYAFAKLTAANQTPDKTVRNKEISNVNKDVVEFFKQTVEDADKIKDIKTYLHELEYEIVREQVLNQGVRFDGRRLDEIRPISVEINPLPGPHGSSVFTRGQTQSLGVVTLGTGSDNQRYETLEGQKEKSFMLHYNFPAFSVGEVRRSSGPGRREIGHGNLAERALKLVLPKSEEFPYVIRVVSEILESNGSSSMASVCSGSLALMAAGVPIKGSVAGIAMGLFSDSSGKYAVLSDIAGLEDHFGDMDCKIAGTRKGITAFQMDLKVTGVSFDVLESVFEQAQRGRFHILDIMEKHISKASDSLAGTAPRIIVRNIPKDRIGELIGPGGKNVRGISELTGAELYIEDDGRVTISGSNQESAEKAAKMVDGFFAEVEVGKIYEGKVKRIADFGAFVEILPGKEGLCHISKIDFKRVNSVKDIVKEGDIIRVKVLNVDKTGKIDLSRKDALEEI.

Mg(2+) is bound by residues Asp486 and Asp492. Residues 553-612 (PRIIVRNIPKDRIGELIGPGGKNVRGISELTGAELYIEDDGRVTISGSNQESAEKAAKMV) form the KH domain. An S1 motif domain is found at 622-690 (GKIYEGKVKR…KTGKIDLSRK (69 aa)).

This sequence belongs to the polyribonucleotide nucleotidyltransferase family. The cofactor is Mg(2+).

It localises to the cytoplasm. The enzyme catalyses RNA(n+1) + phosphate = RNA(n) + a ribonucleoside 5'-diphosphate. In terms of biological role, involved in mRNA degradation. Catalyzes the phosphorolysis of single-stranded polyribonucleotides processively in the 3'- to 5'-direction. This chain is Polyribonucleotide nucleotidyltransferase, found in Leptospira borgpetersenii serovar Hardjo-bovis (strain L550).